The sequence spans 163 residues: Phosphopantetheine adenylyltransferase (163 aa).

T11 contacts substrate. Residues 11 to 12 (TF) and H19 each bind ATP. K43, L75, and R89 together coordinate substrate. Residues 90–92 (GLR), E100, and 125–131 (YSFISST) contribute to the ATP site.

Belongs to the bacterial CoaD family. As to quaternary structure, homohexamer. Requires Mg(2+) as cofactor.

It is found in the cytoplasm. The catalysed reaction is (R)-4'-phosphopantetheine + ATP + H(+) = 3'-dephospho-CoA + diphosphate. It participates in cofactor biosynthesis; coenzyme A biosynthesis; CoA from (R)-pantothenate: step 4/5. Its function is as follows. Reversibly transfers an adenylyl group from ATP to 4'-phosphopantetheine, yielding dephospho-CoA (dPCoA) and pyrophosphate. The polypeptide is Phosphopantetheine adenylyltransferase (Acinetobacter baumannii (strain SDF)).